The following is a 397-amino-acid chain: Cathepsin E (397 aa).

An N-terminal signal peptide occupies residues 1 to 20 (MKPLLVLLLLLLLDLAQAQG). Positions 21–59 (ALHRVPLRRHQSLRKKLRAQGQLSEFWRSHNLDMTRLSE) are cleaved as a propeptide — activation peptide. In terms of domain architecture, Peptidase A1 spans 79–393 (YFGTISIGTP…DRGNNQVGLA (315 aa)). N-linked (GlcNAc...) asparagine glycosylation occurs at N91. Residue D97 is part of the active site. Intrachain disulfides connect C110–C115 and C273–C277. Residue D282 is part of the active site. N323 carries an N-linked (GlcNAc...) asparagine glycan.

The protein belongs to the peptidase A1 family. Homodimer; disulfide-linked. In terms of processing, glycosylated. The nature of the carbohydrate chain varies between cell types. In fibroblasts, the proenzyme contains a high mannose-type oligosaccharide, while the mature enzyme contains a complex-type oligosaccharide. Expressed abundantly in the stomach, club cells and alveolar macrophages of the lung, brain microglia, spleen and activated B-lymphocytes. Not expressed in resting B-lymphocytes.

The protein resides in the endosome. It catalyses the reaction Similar to cathepsin D, but slightly broader specificity.. Functionally, may have a role in immune function. Probably involved in the processing of antigenic peptides during MHC class II-mediated antigen presentation. May play a role in activation-induced lymphocyte depletion in the thymus, and in neuronal degeneration and glial cell activation in the brain. This chain is Cathepsin E (Ctse), found in Mus musculus (Mouse).